The sequence spans 588 residues: Transport ATP-binding protein AarD (588 aa).

In terms of domain architecture, ABC transmembrane type-1 spans 24–316 (LRISMLLGVV…LGTYYHAKAQ (293 aa)). 6 helical membrane passes run 29-49 (LLGVVSGLLIIAQAWFLAVIL), 62-82 (LLTPFILLLAVFVLRALLTVI), 149-169 (IIPIMILIAIFPFNWAAALIL), 170-190 (FATAPLIPIFMALVGLGAADA), 250-270 (SGVLEFFASISIAIVAVYFGF), and 276-296 (LNFGSYGLPVTMFAGFLALIL). The ABC transporter domain maps to 350–583 (IEANKLEIYS…EGPFARLLAH (234 aa)). Residue 383-390 (GQSGAGKS) coordinates ATP.

This sequence belongs to the ABC transporter superfamily.

The protein resides in the cell inner membrane. Functionally, somehow involved in the cytochrome D branch of aerobic respiration. Seems to be a component of a transport system. The chain is Transport ATP-binding protein AarD (aarD) from Providencia stuartii.